The sequence spans 296 residues: Fructose-bisphosphate aldolase class 1 (296 aa).

Residue E175 is the Proton acceptor of the active site. K212 functions as the Schiff-base intermediate with dihydroxyacetone-P in the catalytic mechanism.

It belongs to the class I fructose-bisphosphate aldolase family.

It carries out the reaction beta-D-fructose 1,6-bisphosphate = D-glyceraldehyde 3-phosphate + dihydroxyacetone phosphate. Its pathway is carbohydrate degradation; glycolysis; D-glyceraldehyde 3-phosphate and glycerone phosphate from D-glucose: step 4/4. The protein is Fructose-bisphosphate aldolase class 1 of Staphylococcus aureus (strain bovine RF122 / ET3-1).